Here is a 248-residue protein sequence, read N- to C-terminus: tRNA pseudouridine synthase A (248 aa).

The active-site Nucleophile is the Asp-55. Tyr-114 contributes to the substrate binding site.

The protein belongs to the tRNA pseudouridine synthase TruA family. Homodimer.

It catalyses the reaction uridine(38/39/40) in tRNA = pseudouridine(38/39/40) in tRNA. Its function is as follows. Formation of pseudouridine at positions 38, 39 and 40 in the anticodon stem and loop of transfer RNAs. In Rhodopseudomonas palustris (strain ATCC BAA-98 / CGA009), this protein is tRNA pseudouridine synthase A.